Reading from the N-terminus, the 353-residue chain is GTPase Obg (353 aa).

The 159-residue stretch at 1 to 159 (MKFLDEAKVY…RWIWLRLKLI (159 aa)) folds into the Obg domain. The region spanning 160–327 (ADAGLVGLPN…VLRALVAVIG (168 aa)) is the OBG-type G domain. Residues 166-173 (GLPNAGKS), 191-195 (FTTLH), 212-215 (DIPG), 279-282 (NKID), and 308-310 (SGV) each bind GTP. Residues S173 and T193 each contribute to the Mg(2+) site.

Belongs to the TRAFAC class OBG-HflX-like GTPase superfamily. OBG GTPase family. In terms of assembly, monomer. Mg(2+) is required as a cofactor.

It is found in the cytoplasm. An essential GTPase which binds GTP, GDP and possibly (p)ppGpp with moderate affinity, with high nucleotide exchange rates and a fairly low GTP hydrolysis rate. Plays a role in control of the cell cycle, stress response, ribosome biogenesis and in those bacteria that undergo differentiation, in morphogenesis control. In Rhodopseudomonas palustris (strain TIE-1), this protein is GTPase Obg.